Reading from the N-terminus, the 240-residue chain is Ubiquinone biosynthesis O-methyltransferase (240 aa).

S-adenosyl-L-methionine-binding residues include Arg-36, Gly-60, Asp-81, and Leu-123.

It belongs to the methyltransferase superfamily. UbiG/COQ3 family.

It catalyses the reaction a 3-demethylubiquinol + S-adenosyl-L-methionine = a ubiquinol + S-adenosyl-L-homocysteine + H(+). It carries out the reaction a 3-(all-trans-polyprenyl)benzene-1,2-diol + S-adenosyl-L-methionine = a 2-methoxy-6-(all-trans-polyprenyl)phenol + S-adenosyl-L-homocysteine + H(+). It participates in cofactor biosynthesis; ubiquinone biosynthesis. Its function is as follows. O-methyltransferase that catalyzes the 2 O-methylation steps in the ubiquinone biosynthetic pathway. The polypeptide is Ubiquinone biosynthesis O-methyltransferase (Rickettsia bellii (strain OSU 85-389)).